Reading from the N-terminus, the 477-residue chain is UDP-N-acetylmuramate--L-alanine ligase (477 aa).

117 to 123 is an ATP binding site; it reads GTHGKTT.

Belongs to the MurCDEF family.

It localises to the cytoplasm. It catalyses the reaction UDP-N-acetyl-alpha-D-muramate + L-alanine + ATP = UDP-N-acetyl-alpha-D-muramoyl-L-alanine + ADP + phosphate + H(+). Its pathway is cell wall biogenesis; peptidoglycan biosynthesis. Its function is as follows. Cell wall formation. This chain is UDP-N-acetylmuramate--L-alanine ligase, found in Phenylobacterium zucineum (strain HLK1).